The sequence spans 684 residues: 1,4-alpha-glucan-branching enzyme (684 aa).

2 residues coordinate (1,4-alpha-D-glucosyl)n: tryptophan 88 and lysine 123. The active-site Nucleophile is aspartate 340. Catalysis depends on glutamate 395, which acts as the Proton donor.

Belongs to the glycosyl hydrolase 13 family. GlgB subfamily.

It localises to the cytoplasm. It carries out the reaction Transfers a segment of a (1-&gt;4)-alpha-D-glucan chain to a primary hydroxy group in a similar glucan chain.. The protein operates within glycan biosynthesis; glycogen biosynthesis. Functionally, glycogen-branching enzyme participates in the glycogen biosynthetic process along with glycogenin and glycogen synthase. Generates alpha-1,6-glucosidic branches from alpha-1,4-linked glucose chains, to increase solubility of the glycogen polymer. This Emericella nidulans (strain FGSC A4 / ATCC 38163 / CBS 112.46 / NRRL 194 / M139) (Aspergillus nidulans) protein is 1,4-alpha-glucan-branching enzyme (be1).